A 247-amino-acid polypeptide reads, in one-letter code: 6-phosphogluconolactonase (247 aa).

Belongs to the glucosamine/galactosamine-6-phosphate isomerase family. 6-phosphogluconolactonase subfamily.

It catalyses the reaction 6-phospho-D-glucono-1,5-lactone + H2O = 6-phospho-D-gluconate + H(+). The protein operates within carbohydrate degradation; pentose phosphate pathway; D-ribulose 5-phosphate from D-glucose 6-phosphate (oxidative stage): step 2/3. Functionally, hydrolysis of 6-phosphogluconolactone to 6-phosphogluconate. This Mycobacterium leprae (strain TN) protein is 6-phosphogluconolactonase (pgl).